An 844-amino-acid chain; its full sequence is Translation initiation factor IF-2 (844 aa).

A compositionally biased stretch (basic and acidic residues) spans 1 to 11 (MTEDVKADAPK). Disordered regions lie at residues 1 to 48 (MTED…VKTD) and 79 to 249 (RLEA…GTAL). Over residues 21-30 (TTVSSTTTGG) the composition is skewed to low complexity. Positions 79 to 161 (RLEAEKAATK…AAEEAKRYAE (83 aa)) are enriched in basic and acidic residues. Positions 162-175 (ADDSDNESSSEDYS) are enriched in acidic residues. Over residues 200–210 (RGKNKVAKAKK) the composition is skewed to basic residues. A compositionally biased stretch (basic and acidic residues) spans 211–237 (GGRDDENSKNSKNERESNRKNQKDAKF). One can recognise a tr-type G domain in the interval 343–513 (TRAPVVTIMG…LLQSEVLELT (171 aa)). Residues 352-359 (GHVDHGKT) are G1. 352-359 (GHVDHGKT) is a binding site for GTP. The interval 377–381 (GITQH) is G2. The G3 stretch occupies residues 399–402 (DTPG). GTP contacts are provided by residues 399-403 (DTPGH) and 453-456 (NKID). Positions 453-456 (NKID) are G4. The segment at 489–491 (SAK) is G5.

This sequence belongs to the TRAFAC class translation factor GTPase superfamily. Classic translation factor GTPase family. IF-2 subfamily.

The protein localises to the cytoplasm. Functionally, one of the essential components for the initiation of protein synthesis. Protects formylmethionyl-tRNA from spontaneous hydrolysis and promotes its binding to the 30S ribosomal subunits. Also involved in the hydrolysis of GTP during the formation of the 70S ribosomal complex. The polypeptide is Translation initiation factor IF-2 (Haemophilus influenzae (strain 86-028NP)).